The primary structure comprises 295 residues: GTPase Era (295 aa).

Positions 3–171 (KSGFITVIGR…LELMKKYLPE (169 aa)) constitute an Era-type G domain. A G1 region spans residues 11 to 18 (GRPNVGKS). GTP is bound at residue 11 to 18 (GRPNVGKS). The tract at residues 37–41 (QTTRN) is G2. Positions 58–61 (DTPG) are G3. GTP contacts are provided by residues 58–62 (DTPGM) and 120–123 (NKID). The segment at 120–123 (NKID) is G4. Residues 150-152 (ISA) form a G5 region. Positions 202–279 (LSEEVPHGIA…SLKVWVKVKK (78 aa)) constitute a KH type-2 domain.

This sequence belongs to the TRAFAC class TrmE-Era-EngA-EngB-Septin-like GTPase superfamily. Era GTPase family. As to quaternary structure, monomer.

The protein localises to the cytoplasm. Its subcellular location is the cell membrane. In terms of biological role, an essential GTPase that binds both GDP and GTP, with rapid nucleotide exchange. Plays a role in 16S rRNA processing and 30S ribosomal subunit biogenesis and possibly also in cell cycle regulation and energy metabolism. The protein is GTPase Era of Clostridium tetani (strain Massachusetts / E88).